We begin with the raw amino-acid sequence, 379 residues long: MARRSAFPAAALWLWSILLCLLALRAEAGPPQEESLYLWIDAHQARVLIGFEEDILIVSEGKMAPFTHDFRKAQQRMPAIPVNIHSMNFTWQAAGQAEYFYEFLSLRSLDKGIMADPTVNVPLLGTVPHKASVVQVGFPCLGKQDGVAAFEVDVIVMNSEGNTILQTPQNAIFFKTCQQAECPGGCRNGGFCNERRICECPDGFHGPHCEKALCTPRCMNGGLCVTPGFCICPPGFYGVNCDKANCSTTCFNGGTCFYPGKCICPPGLEGEQCEISKCPQPCRNGGKCIGKSKCKCSKGYQGDLCSKPVCEPGCGAHGTCHEPNKCQCQEGWHGRHCNKRYEASLIHALRPAGAQLRQHTPSLKKAEERRDPPESNYIW.

The first 28 residues, 1–28 (MARRSAFPAAALWLWSILLCLLALRAEA), serve as a signal peptide directing secretion. One can recognise a WIF domain in the interval 38 to 177 (LWIDAHQARV…PQNAIFFKTC (140 aa)). N-linked (GlcNAc...) asparagine glycosylation occurs at Asn-88. 7 cysteine pairs are disulfide-bonded: Cys-140-Cys-177, Cys-182-Cys-192, Cys-186-Cys-198, Cys-200-Cys-209, Cys-214-Cys-224, Cys-218-Cys-230, and Cys-232-Cys-241. EGF-like domains are found at residues 178 to 210 (QQAE…PHCE), 211 to 242 (KALC…VNCD), 243 to 271 (KANC…LEGE), 274 to 306 (EISK…DLCS), and 307 to 338 (KPVC…RHCN). The N-linked (GlcNAc...) asparagine glycan is linked to Asn-245. 8 disulfides stabilise this stretch: Cys-246–Cys-256, Cys-250–Cys-262, Cys-278–Cys-288, Cys-282–Cys-294, Cys-296–Cys-305, Cys-310–Cys-320, Cys-314–Cys-326, and Cys-328–Cys-337. The tract at residues 354-379 (AQLRQHTPSLKKAEERRDPPESNYIW) is disordered. A compositionally biased stretch (basic and acidic residues) spans 364 to 373 (KKAEERRDPP).

Interacts with MYOC.

It is found in the secreted. Binds to WNT proteins and inhibits their activities. May be involved in mesoderm segmentation. In Homo sapiens (Human), this protein is Wnt inhibitory factor 1 (WIF1).